Reading from the N-terminus, the 3224-residue chain is E3 SUMO-protein ligase RanBP2 (3224 aa).

Threonine 19 carries the phosphothreonine modification. Serine 21 carries the phosphoserine modification. TPR repeat units lie at residues 26–59 (SMKG…QERD), 60–93 (PKAH…NPTQ), 94–128 (KDLV…FPGS), 165–201 (VHVN…RSSL), 287–319 (GHFY…AALC), 583–616 (QKTG…LKII), and 648–681 (EDAH…VSYW). Positions 760–802 (GPLYKNGSLRNADSEIKHSTPSPTRYSLSPSKSYKYSPKTPPR) are disordered. Position 779 is a phosphothreonine (threonine 779). A phosphoserine mark is found at serine 781, serine 788, and serine 837. Residues 785-797 (YSLSPSKSYKYSP) are compositionally biased toward low complexity. Arginine 945 bears the Asymmetric dimethylarginine mark. A phosphoserine mark is found at serine 948 and serine 955. Copy 1 of the repeat occupies 1001–1002 (FG). The tract at residues 1001–3206 (FGKTNFVQPM…DTVKKIESFG (2206 aa)) is 22 X 2 AA repeats of F-G. Arginine 1016 carries the asymmetric dimethylarginine; alternate modification. Omega-N-methylarginine; alternate is present on arginine 1016. Phosphothreonine is present on threonine 1098. Residues 1101-1102 (FG) form repeat 2. Phosphoserine occurs at positions 1103, 1107, and 1110. Positions 1138–1174 (GKSVFGTPTLETANKNHETDGGSAHGDDDDDGPHFEP) are disordered. Copy 3 of the repeat occupies 1142–1143 (FG). The residue at position 1144 (threonine 1144) is a Phosphothreonine. Phosphoserine is present on residues serine 1160 and serine 1249. The RanBD1 1 domain maps to 1171-1307 (HFEPVVPLPD…FEEAQSILKA (137 aa)). A Glycyl lysine isopeptide (Lys-Gly) (interchain with G-Cter in SUMO2) cross-link involves residue lysine 1350. The segment at 1351 to 1381 (KEGSWWHCNSCSLKNASTAKKCVSCQNLNPS) adopts a RanBP2-type 1 zinc-finger fold. Phosphothreonine is present on residues threonine 1396 and threonine 1412. Lysine 1414 is covalently cross-linked (Glycyl lysine isopeptide (Lys-Gly) (interchain with G-Cter in SUMO2)). A RanBP2-type 2 zinc finger spans residues 1415–1444 (KEGHWDCSICLVRNEPTVSRCIACQNTKSA). Residues serine 1443, serine 1450, and serine 1456 each carry the phosphoserine modification. Repeat unit 4 spans residues 1459–1460 (FG). A RanBP2-type 3 zinc finger spans residues 1479–1508 (KEGQWDCSACLVQNEGSSTKCAACQNPRKQ). Residues serine 1509 and serine 1520 each carry the phosphoserine modification. Repeat 5 spans residues 1523–1524 (FG). The RanBP2-type 4 zinc-finger motif lies at 1543-1572 (KEGQWDCSSCLVRNEANATRCVACQNPDKP). A disordered region spans residues 1569 to 1595 (PDKPSPSTSVPAPASFKFGTSETSKAP). Serine 1573 is subject to Phosphoserine. Residues 1573–1583 (SPSTSVPAPAS) show a composition bias toward low complexity. Copy 6 of the repeat occupies 1586-1587 (FG). A Glycyl lysine isopeptide (Lys-Gly) (interchain with G-Cter in SUMO2) cross-link involves residue lysine 1596. Lysine 1605 participates in a covalent cross-link: Glycyl lysine isopeptide (Lys-Gly) (interchain with G-Cter in SUMO1); alternate. Lysine 1605 participates in a covalent cross-link: Glycyl lysine isopeptide (Lys-Gly) (interchain with G-Cter in SUMO2); alternate. The RanBP2-type 5 zinc finger occupies 1606–1635 (KEGQWDCSVCLVRNEASATKCIACQNPGKQ). Positions 1633 to 1653 (GKQNQTTSAVSTPASSETSKA) are enriched in polar residues. Residues 1633–1657 (GKQNQTTSAVSTPASSETSKAPKSG) are disordered. Lysine 1655 participates in a covalent cross-link: Glycyl lysine isopeptide (Lys-Gly) (interchain with G-Cter in SUMO2). Lysine 1664 is covalently cross-linked (Glycyl lysine isopeptide (Lys-Gly) (interchain with G-Cter in SUMO1); alternate). Residue lysine 1664 forms a Glycyl lysine isopeptide (Lys-Gly) (interchain with G-Cter in SUMO2); alternate linkage. The RanBP2-type 6 zinc-finger motif lies at 1665 to 1694 (KEGQWDCSVCLVRNEASATKCIACQNPGKQ). Positions 1692-1712 (GKQNQTTSAVSTPASSETSKA) are enriched in polar residues. A disordered region spans residues 1692–1716 (GKQNQTTSAVSTPASSETSKAPKSG). Residue lysine 1714 forms a Glycyl lysine isopeptide (Lys-Gly) (interchain with G-Cter in SUMO2) linkage. Lysine 1723 participates in a covalent cross-link: Glycyl lysine isopeptide (Lys-Gly) (interchain with G-Cter in SUMO1); alternate. Lysine 1723 participates in a covalent cross-link: Glycyl lysine isopeptide (Lys-Gly) (interchain with G-Cter in SUMO2); alternate. 2 RanBP2-type zinc fingers span residues 1724–1753 (KEGQ…PSKQ) and 1781–1810 (RKGQ…SKPT). 2 positions are modified to phosphoserine: serine 1833 and serine 1835. Tandem repeats lie at residues 1852 to 1853 (FG) and 1861 to 1862 (FG). Phosphoserine is present on residues serine 1869 and serine 1871. The stretch at 1900-1901 (FG) is repeat 9. A disordered region spans residues 1903-1928 (SEPGNQEKKSEKPLENGTGFQAQDIS). Positions 1907–1916 (NQEKKSEKPL) are enriched in basic and acidic residues. A run of 2 repeats spans residues 1938 to 1939 (FG) and 1961 to 1962 (FG). Lysine 1977 bears the N6-acetyllysine mark. Phosphothreonine is present on threonine 2005. Serine 2008 is modified (phosphoserine). In terms of domain architecture, RanBD1 2 spans 2012–2148 (HFEPVVQMPE…FEECQRLLLD (137 aa)). Lysine 2022 participates in a covalent cross-link: Glycyl lysine isopeptide (Lys-Gly) (interchain with G-Cter in SUMO2). The interval 2147–2287 (LDIPLQTPHK…SKSPAKLNQS (141 aa)) is interaction with BICD2. Threonine 2153 bears the Phosphothreonine mark. Positions 2188-2224 (QTKVTEEENKGSGTGAAGASDTTIKPNPENTGPTLEW) are disordered. Over residues 2211–2220 (IKPNPENTGP) the composition is skewed to polar residues. Serine 2246 and serine 2251 each carry phosphoserine. Copy 12 of the repeat occupies 2260–2261 (FG). 3 positions are modified to phosphoserine: serine 2270, serine 2280, and serine 2290. Residues 2273 to 2284 (SALSPSKSPAKL) show a composition bias toward low complexity. A disordered region spans residues 2273 to 2307 (SALSPSKSPAKLNQSGTSVGTDEESDVTQEEERDG). Threonine 2293 carries the phosphothreonine modification. Over residues 2293-2305 (TDEESDVTQEEER) the composition is skewed to acidic residues. Serine 2297 carries the post-translational modification Phosphoserine. Positions 2309-2445 (YFEPVVPLPD…FDEAKTAQEK (137 aa)) constitute a RanBD1 3 domain. Serine 2462, serine 2493, and serine 2510 each carry phosphoserine. The disordered stretch occupies residues 2486-2509 (DDVADATSEVEVSSTSETTPKAVV). The span at 2492–2504 (TSEVEVSSTSETT) shows a compositional bias: low complexity. Repeat 13 spans residues 2516–2517 (FG). Lysine 2522 participates in a covalent cross-link: Glycyl lysine isopeptide (Lys-Gly) (interchain with G-Cter in SUMO2). Phosphoserine is present on serine 2526. 2 tandem repeats follow at residues 2535–2536 (FG) and 2545–2546 (FG). The segment covering 2556-2569 (NNSETSSVAQSGSE) has biased composition (polar residues). A disordered region spans residues 2556–2584 (NNSETSSVAQSGSESKVEPKKCELSKNSD). Basic and acidic residues predominate over residues 2570 to 2584 (SKVEPKKCELSKNSD). Lysine 2592 participates in a covalent cross-link: Glycyl lysine isopeptide (Lys-Gly) (interchain with G-Cter in SUMO). Residue lysine 2594 forms a Glycyl lysine isopeptide (Lys-Gly) (interchain with G-Cter in SUMO1); alternate linkage. A Glycyl lysine isopeptide (Lys-Gly) (interchain with G-Cter in SUMO2); alternate cross-link involves residue lysine 2594. Residue lysine 2612 forms a Glycyl lysine isopeptide (Lys-Gly) (interchain with G-Cter in SUMO2) linkage. At threonine 2613 the chain carries Phosphothreonine. An interaction with sumoylated RANGAP1 region spans residues 2631–2635 (DVLIV). 2 tandem repeats follow at residues 2633–2685 (LIVY…KKLN) and 2711–2761 (IIVW…QKVQ). The segment at 2633 to 2685 (LIVYELTPTAEQKALATKLKLPPTFFCYKNRPDYVSEEEEDDEDFETAVKKLN) is interaction with UBE2I. Residues 2633–2710 (LIVYELTPTA…ENTADNEKEC (78 aa)) form a required for E3 SUMO-ligase activity region. Residues 2633 to 2761 (LIVYELTPTA…DFQSELQKVQ (129 aa)) are 2 X 50 AA approximate repeats. Tyrosine 2666 is modified (phosphotyrosine). Residues serine 2668 and serine 2741 each carry the phosphoserine modification. Residues 2686–2761 (GKLYLDGSEK…DFQSELQKVQ (76 aa)) form an interaction with SUMO1 region. Threonine 2743 bears the Phosphothreonine mark. Residue lysine 2792 forms a Glycyl lysine isopeptide (Lys-Gly) (interchain with G-Cter in SUMO2) linkage. The segment at 2793 to 2818 (SEEPDSITKSISSPSVSSETMDKPVD) is disordered. Over residues 2799 to 2810 (ITKSISSPSVSS) the composition is skewed to low complexity. Residue serine 2805 is modified to Phosphoserine. Lysine 2815 participates in a covalent cross-link: Glycyl lysine isopeptide (Lys-Gly) (interchain with G-Cter in SUMO2). 4 repeat units span residues 2840 to 2841 (FG), 2842 to 2843 (FG), 2863 to 2864 (FG), and 2880 to 2881 (FG). The residue at position 2900 (serine 2900) is a Phosphoserine. The RanBD1 4 domain maps to 2911 to 3046 (HFEPIVSLPE…FEECQQNLMK (136 aa)). Residues 3067–3223 (FFDVCADGEP…RRITITECGQ (157 aa)) form the PPIase cyclophilin-type domain. Tandem repeats lie at residues 3106 to 3107 (FG), 3189 to 3190 (FG), and 3205 to 3206 (FG). Phosphoserine is present on serine 3207.

Belongs to the RanBP2 E3 ligase family. As to quaternary structure, part of the nuclear pore complex. Forms a complex with NXT1, NXF1 and RANGAP1. Forms a tight complex with RANBP1 and UBE2I. Interacts with SUMO1 but not SUMO2. Interacts with PRKN. Interacts with sumoylated RANGAP1. Interacts with CDCA8. Interacts with PML (isoform PML-4). Interacts with BICD2. Interacts with MCM3AP isoform GANP. Interacts with COX11. Interacts with synaptic plasticity regulator PANTS. (Microbial infection) Interacts with HIV-1 Vpu protein; this interaction allows Vpu to down-regulate BLM sumoylation. Polyubiquitinated by PRKN, which leads to proteasomal degradation. Post-translationally, the inner channel of the NPC has a different redox environment from the cytoplasm and allows the formation of interchain disulfide bonds between some nucleoporins, the significant increase of these linkages upon oxidative stress reduces the permeability of the NPC.

It localises to the nucleus. It is found in the nucleus membrane. Its subcellular location is the nuclear pore complex. The protein localises to the nucleus envelope. It functions in the pathway protein modification; protein sumoylation. Its function is as follows. E3 SUMO-protein ligase which facilitates SUMO1 and SUMO2 conjugation by UBE2I. Involved in transport factor (Ran-GTP, karyopherin)-mediated protein import via the F-G repeat-containing domain which acts as a docking site for substrates. Binds single-stranded RNA (in vitro). May bind DNA. Component of the nuclear export pathway. Specific docking site for the nuclear export factor exportin-1. Inhibits EIF4E-dependent mRNA export. Sumoylates PML at 'Lys-490' which is essential for the proper assembly of PML-NB. Recruits BICD2 to the nuclear envelope and cytoplasmic stacks of nuclear pore complex known as annulate lamellae during G2 phase of cell cycle. Probable inactive PPIase with no peptidyl-prolyl cis-trans isomerase activity. The sequence is that of E3 SUMO-protein ligase RanBP2 (RANBP2) from Homo sapiens (Human).